Consider the following 378-residue polypeptide: Cytochrome b (378 aa).

4 consecutive transmembrane segments (helical) span residues 32–52 (FGSL…FLAM), 76–97 (WLIR…FLHV), 112–132 (WNIG…GYVL), and 177–197 (FFAF…VHLL). His-82 and His-96 together coordinate heme b. Heme b is bound by residues His-181 and His-195. His-200 serves as a coordination point for a ubiquinone. 4 helical membrane passes run 225 to 245 (IKDA…VLFF), 287 to 307 (LGGV…PILH), 319 to 339 (LSQC…WIGG), and 346 to 366 (FITI…FALP).

The protein belongs to the cytochrome b family. The cytochrome bc1 complex contains 11 subunits: 3 respiratory subunits (MT-CYB, CYC1 and UQCRFS1), 2 core proteins (UQCRC1 and UQCRC2) and 6 low-molecular weight proteins (UQCRH/QCR6, UQCRB/QCR7, UQCRQ/QCR8, UQCR10/QCR9, UQCR11/QCR10 and a cleavage product of UQCRFS1). This cytochrome bc1 complex then forms a dimer. Requires heme b as cofactor.

Its subcellular location is the mitochondrion inner membrane. Component of the ubiquinol-cytochrome c reductase complex (complex III or cytochrome b-c1 complex) that is part of the mitochondrial respiratory chain. The b-c1 complex mediates electron transfer from ubiquinol to cytochrome c. Contributes to the generation of a proton gradient across the mitochondrial membrane that is then used for ATP synthesis. This is Cytochrome b (MT-CYB) from Sciurus aberti (Abert's squirrel).